Here is a 200-residue protein sequence, read N- to C-terminus: Large ribosomal subunit protein bL25 (200 aa).

Disordered stretches follow at residues 1 to 20 and 179 to 200; these read MTIE…ASRR and PVVA…GEAA.

It belongs to the bacterial ribosomal protein bL25 family. CTC subfamily. In terms of assembly, part of the 50S ribosomal subunit; part of the 5S rRNA/L5/L18/L25 subcomplex. Contacts the 5S rRNA. Binds to the 5S rRNA independently of L5 and L18.

Functionally, this is one of the proteins that binds to the 5S RNA in the ribosome where it forms part of the central protuberance. The chain is Large ribosomal subunit protein bL25 from Azoarcus sp. (strain BH72).